A 128-amino-acid polypeptide reads, in one-letter code: Small ribosomal subunit protein uS11 (128 aa).

This sequence belongs to the universal ribosomal protein uS11 family. In terms of assembly, part of the 30S ribosomal subunit. Interacts with proteins S7 and S18. Binds to IF-3.

In terms of biological role, located on the platform of the 30S subunit, it bridges several disparate RNA helices of the 16S rRNA. Forms part of the Shine-Dalgarno cleft in the 70S ribosome. This chain is Small ribosomal subunit protein uS11, found in Porphyromonas gingivalis (strain ATCC BAA-308 / W83).